Here is a 367-residue protein sequence, read N- to C-terminus: Nodulation protein NolF (367 aa).

It belongs to the membrane fusion protein (MFP) (TC 8.A.1) family.

In terms of biological role, involved in the production of Medicago-specific nodulation signal molecule. The chain is Nodulation protein NolF (nolF) from Rhizobium meliloti (strain 1021) (Ensifer meliloti).